A 71-amino-acid chain; its full sequence is Small ribosomal subunit protein bS21 (71 aa).

The protein belongs to the bacterial ribosomal protein bS21 family.

The polypeptide is Small ribosomal subunit protein bS21 (Acidithiobacillus ferrooxidans (strain ATCC 23270 / DSM 14882 / CIP 104768 / NCIMB 8455) (Ferrobacillus ferrooxidans (strain ATCC 23270))).